A 359-amino-acid chain; its full sequence is WAT1-related protein At5g64700 (359 aa).

10 helical membrane passes run 10–30 (LMVT…KAVF), 37–57 (FVFV…LAFF), 66–86 (LSFV…TLSL), 100–120 (LAAA…LLFG), 135–155 (LVGI…KGPL), 186–206 (WLKG…WLVL), 218–238 (LYFT…IAIA), 256–276 (AVIY…SWVI), 282–302 (VFLS…SAIL), and 306–326 (IISL…YCVL). 2 consecutive EamA domains span residues 18 to 136 (IYTI…AKLV) and 198 to 326 (ILWG…YCVL).

This sequence belongs to the drug/metabolite transporter (DMT) superfamily. Plant drug/metabolite exporter (P-DME) (TC 2.A.7.4) family.

Its subcellular location is the membrane. This chain is WAT1-related protein At5g64700, found in Arabidopsis thaliana (Mouse-ear cress).